Reading from the N-terminus, the 260-residue chain is Hydroxyethylthiazole kinase 1 (260 aa).

A substrate-binding site is contributed by methionine 39. ATP contacts are provided by arginine 115 and threonine 160. Glycine 187 serves as a coordination point for substrate.

Belongs to the Thz kinase family. It depends on Mg(2+) as a cofactor.

It catalyses the reaction 5-(2-hydroxyethyl)-4-methylthiazole + ATP = 4-methyl-5-(2-phosphooxyethyl)-thiazole + ADP + H(+). It participates in cofactor biosynthesis; thiamine diphosphate biosynthesis; 4-methyl-5-(2-phosphoethyl)-thiazole from 5-(2-hydroxyethyl)-4-methylthiazole: step 1/1. In terms of biological role, catalyzes the phosphorylation of the hydroxyl group of 4-methyl-5-beta-hydroxyethylthiazole (THZ). In Streptococcus pneumoniae (strain Taiwan19F-14), this protein is Hydroxyethylthiazole kinase 1.